The sequence spans 285 residues: Diaminopimelate epimerase (285 aa).

Substrate-binding residues include asparagine 11 and asparagine 62. The active-site Proton donor is cysteine 71. Residues 72–73 (GN), asparagine 167, asparagine 200, and 218–219 (ER) contribute to the substrate site. Catalysis depends on cysteine 227, which acts as the Proton acceptor. A substrate-binding site is contributed by 228 to 229 (GT).

This sequence belongs to the diaminopimelate epimerase family. Homodimer.

It localises to the cytoplasm. The enzyme catalyses (2S,6S)-2,6-diaminopimelate = meso-2,6-diaminopimelate. The protein operates within amino-acid biosynthesis; L-lysine biosynthesis via DAP pathway; DL-2,6-diaminopimelate from LL-2,6-diaminopimelate: step 1/1. Catalyzes the stereoinversion of LL-2,6-diaminopimelate (L,L-DAP) to meso-diaminopimelate (meso-DAP), a precursor of L-lysine and an essential component of the bacterial peptidoglycan. The sequence is that of Diaminopimelate epimerase from Agathobacter rectalis (strain ATCC 33656 / DSM 3377 / JCM 17463 / KCTC 5835 / VPI 0990) (Eubacterium rectale).